The sequence spans 422 residues: Tryptophan synthase beta chain 2 (422 aa).

An N6-(pyridoxal phosphate)lysine modification is found at lysine 111.

It belongs to the TrpB family. In terms of assembly, tetramer of two alpha and two beta chains. Pyridoxal 5'-phosphate serves as cofactor.

The catalysed reaction is (1S,2R)-1-C-(indol-3-yl)glycerol 3-phosphate + L-serine = D-glyceraldehyde 3-phosphate + L-tryptophan + H2O. Its pathway is amino-acid biosynthesis; L-tryptophan biosynthesis; L-tryptophan from chorismate: step 5/5. The beta subunit is responsible for the synthesis of L-tryptophan from indole and L-serine. This is Tryptophan synthase beta chain 2 (trpB2) from Thermotoga maritima (strain ATCC 43589 / DSM 3109 / JCM 10099 / NBRC 100826 / MSB8).